A 536-amino-acid chain; its full sequence is MHWHGLSQSTAPFSDGSPQASQWPIKPGEYFDYEIRPNVGEAGTHFYHSHVGFQAVSAAGPLIVEEKHGKSPPFPYDEERILFISELYNKTDSMTETELLRPYDVVRCFPGMSANETDTPEPWVMPDPSLVESCGPEVIQVDPDKTYRMRVIGGPALNLVTMGFEDHQELSIMAADGKYTKLAKTERIQIASGQRFDFLLHTKTEDELRRLGKSAFWIQMESRYRPMNVSSYALLSYNTPSDLAFNQTTDLVPPEKQPLTLPNKVYDWLEYVLEPLEPNGFPTADKVNRTVVLTSLQLIAKEGVYAAVSNRTWTETNQHRNNTPFWKREHQAGTPYLVDIFRRGDEAIPDYETTVQKHGGWDPDLNVYVAKVGEVIDIIMVNQPNGLDIGFDLHPWHIHGGHIYDLGSGPGSYNATANEEKLKGYNPVIRDTTMLYKYTPGQYVGENKNFTDQGWRAWRLHVQDPGVWMVHCHTLQHMIMGMQTVWMMGNASEITRGVSPESLEGYLNYGGDAYGNASYDPIVQHHFDYGLQQILQ.

Positions 1 to 21 (MHWHGLSQSTAPFSDGSPQAS) are disordered. Plastocyanin-like domains follow at residues 1-67 (MHWH…VEEK), 79-238 (ERIL…LSYN), and 354-488 (TVQK…VWMM). 4 residues coordinate Cu cation: H2, H4, H48, and H50. H397 contributes to the Cu cation binding site.

This sequence belongs to the multicopper oxidase family.

The protein operates within secondary metabolite biosynthesis. Multicopper oxidase; part of the gene cluster that mediates the biosynthesis of terrein, a fungal metabolite with ecological, antimicrobial, antiproliferative, and antioxidative activities. The first step in the pathway is performed by the polyketide synthase terA that produces 4-hydroxy-6-methylpyranon (4-HMP), orsellinic acid (OA), and 2,3-dehydro-6-hydroxymellein (2,3-dehydro-6-HM) by condensing acetyl-CoA with two, three, or four malonyl-CoA units, respectively. 4-HMP and OA are not pathway intermediates, but are rather shunt or side products. 2,3-dehydro-6-HM is further converted to 6-hydroxymellein (6-HM) by the 6-hydroxymellein synthase terB. The monooxygenases terC and terD, the multicopper oxidase terE and the Kelch-like protein terF are then involved in the transformation of 6-HM to terrein. Even if they are co-regulated with the other terrein cluster genes, terH and terI seem to be dispensable for terrein production; whereas one or both of the 2 transporters terG and terJ are probably required for efficient secretion of metabolites. The polypeptide is Multicopper oxidase terE (Aspergillus terreus (strain NIH 2624 / FGSC A1156)).